The primary structure comprises 453 residues: GTPase Der (453 aa).

2 EngA-type G domains span residues Pro4–Asp169 and Ile178–Arg353. GTP-binding positions include Gly10 to Ser17, Asp57 to Leu61, Asn120 to Glu123, Gly184 to Ser191, Asp231 to Ile235, and Asn296 to Asp299. Positions Arg354 to Lys439 constitute a KH-like domain.

This sequence belongs to the TRAFAC class TrmE-Era-EngA-EngB-Septin-like GTPase superfamily. EngA (Der) GTPase family. Associates with the 50S ribosomal subunit.

GTPase that plays an essential role in the late steps of ribosome biogenesis. This chain is GTPase Der, found in Cyanothece sp. (strain PCC 7425 / ATCC 29141).